Reading from the N-terminus, the 737-residue chain is Cellulose synthase-like protein E1 (737 aa).

The next 2 membrane-spanning stretches (helical) occupy residues 26 to 45 (AVYR…VLYY) and 58 to 78 (AAWL…VIAQ). Active-site residues include Asp146 and Asp451. A run of 5 helical transmembrane segments spans residues 528-548 (LWAA…LGLV), 551-571 (TPLF…VFCV), 654-674 (VIIA…LSQI), 683-703 (WNVF…NMPI), and 716-736 (IPTA…LVPI).

It belongs to the glycosyltransferase 2 family. Plant cellulose synthase-like E subfamily.

It is found in the golgi apparatus membrane. In terms of biological role, thought to be a Golgi-localized beta-glycan synthase that polymerize the backbones of noncellulosic polysaccharides (hemicelluloses) of plant cell wall. The sequence is that of Cellulose synthase-like protein E1 (CSLE1) from Oryza sativa subsp. japonica (Rice).